The chain runs to 110 residues: uncharacterized protein (110 aa).

The protein to M.jannaschii MJ1213 and A.aeolicus AA15.

This is an uncharacterized protein from Methanocaldococcus jannaschii (strain ATCC 43067 / DSM 2661 / JAL-1 / JCM 10045 / NBRC 100440) (Methanococcus jannaschii).